The sequence spans 127 residues: Small ribosomal subunit protein uS11 (127 aa).

This sequence belongs to the universal ribosomal protein uS11 family. Part of the 30S ribosomal subunit. Interacts with proteins S7 and S18. Binds to IF-3.

Its function is as follows. Located on the platform of the 30S subunit, it bridges several disparate RNA helices of the 16S rRNA. Forms part of the Shine-Dalgarno cleft in the 70S ribosome. This chain is Small ribosomal subunit protein uS11, found in Streptococcus thermophilus (strain CNRZ 1066).